A 647-amino-acid polypeptide reads, in one-letter code: DNA mismatch repair protein MutL (647 aa).

A disordered region spans residues 389–423 (SESSVSSVANKQQPTVKQAKRSADDSDSEHGKLDY). The span at 409–423 (RSADDSDSEHGKLDY) shows a compositional bias: basic and acidic residues.

This sequence belongs to the DNA mismatch repair MutL/HexB family.

Functionally, this protein is involved in the repair of mismatches in DNA. It is required for dam-dependent methyl-directed DNA mismatch repair. May act as a 'molecular matchmaker', a protein that promotes the formation of a stable complex between two or more DNA-binding proteins in an ATP-dependent manner without itself being part of a final effector complex. This chain is DNA mismatch repair protein MutL, found in Streptococcus thermophilus (strain ATCC BAA-491 / LMD-9).